We begin with the raw amino-acid sequence, 296 residues long: Transcription factor Pur-alpha 1 (296 aa).

N-acetylmethionine is present on Met-1. Disordered regions lie at residues Met-1–Gly-25 and Ile-186–Gly-214. Ser-207 bears the Phosphoserine mark.

This sequence belongs to the PUR DNA-binding protein family. In terms of assembly, homodimer. Interacts with TCP20.

The protein resides in the nucleus. Its function is as follows. Transcription factor that specifically binds the purine-rich double-stranded telomeric repeated sequence 5'-AAACCCTAA-3' found in promoter telo boxes. The protein is Transcription factor Pur-alpha 1 (PURA1) of Arabidopsis thaliana (Mouse-ear cress).